A 432-amino-acid polypeptide reads, in one-letter code: Glutamate-1-semialdehyde 2,1-aminomutase (432 aa).

Position 265 is an N6-(pyridoxal phosphate)lysine (lysine 265).

This sequence belongs to the class-III pyridoxal-phosphate-dependent aminotransferase family. HemL subfamily. In terms of assembly, homodimer. Requires pyridoxal 5'-phosphate as cofactor.

The protein localises to the cytoplasm. The catalysed reaction is (S)-4-amino-5-oxopentanoate = 5-aminolevulinate. Its pathway is porphyrin-containing compound metabolism; protoporphyrin-IX biosynthesis; 5-aminolevulinate from L-glutamyl-tRNA(Glu): step 2/2. In Histophilus somni (strain 129Pt) (Haemophilus somnus), this protein is Glutamate-1-semialdehyde 2,1-aminomutase.